A 394-amino-acid chain; its full sequence is Na(+)/H(+) antiporter NhaA (394 aa).

11 consecutive transmembrane segments (helical) span residues 11–31 (LEAASGILLLVSALLAMIFAN), 59–79 (LLMWVNDGFMAVFFILVGMEV), 95–115 (IFPAVAALGGMIIPALVYWFI), 125–145 (GWAIPMATDIAFALGIVALLS), 155–175 (FLLALAIIDDLGAIIVIALFF), 177–197 (HEMSMQALTIASIAIVILVAM), 203–220 (TGLINYAIIGTILWASVL), 254–274 (ALAPWCSFAILPLFAFSNAGV), 296–316 (LIIGKPVGVFLFSYVAVLLGI), 328–348 (IFAIAVLCGIGFTMSMFIAGL), and 365–385 (LGILMGTFVAAIIGYFLLKIT).

The protein belongs to the NhaA Na(+)/H(+) (TC 2.A.33) antiporter family.

It is found in the cell inner membrane. The catalysed reaction is Na(+)(in) + 2 H(+)(out) = Na(+)(out) + 2 H(+)(in). Functionally, na(+)/H(+) antiporter that extrudes sodium in exchange for external protons. The protein is Na(+)/H(+) antiporter NhaA of Actinobacillus pleuropneumoniae serotype 3 (strain JL03).